We begin with the raw amino-acid sequence, 220 residues long: Large ribosomal subunit protein uL16z (220 aa).

This sequence belongs to the universal ribosomal protein uL16 family. As to quaternary structure, component of the small ribosomal subunit. Mature ribosomes consist of a small (40S) and a large (60S) subunit. The 40S subunit contains about 33 different proteins and 1 molecule of RNA (18S). The 60S subunit contains about 49 different proteins and 3 molecules of RNA (25S, 5.8S and 5S). Interacts with NIK1. Interacts with LIMYB. In terms of processing, phosphorylated by NIK1 and NIK2 in vitro. In terms of tissue distribution, ubiquitous, with the highest expression in flowers. Expressed in seedlings, leaves, roots, stems and flowers. Expressed in young leaves, mostly in dividing cells and in the hydathodes, in the root tips and lateral root primordia, in pistils, anthers, and pollen grains, and in developing seeds.

Its subcellular location is the cytoplasm. It is found in the nucleus. In terms of biological role, ribosomal protein involved in translational regulation. Contribute to general translation under UV-B stress. Involved in the NIK1-mediated defense response to geminivirus infection. Acts coordinately with LIMYB as a transcriptional repressor. This Arabidopsis thaliana (Mouse-ear cress) protein is Large ribosomal subunit protein uL16z.